Consider the following 265-residue polypeptide: Putative 2-aminoethylphosphonate transport system permease protein PhnV (265 aa).

6 helical membrane-spanning segments follow: residues 13 to 33, 69 to 89, 104 to 124, 131 to 151, 185 to 205, and 233 to 253; these read GVVA…VILM, LTIG…AALA, VFYL…LVAF, MNGT…AFTF, LPLL…LSMG, and NIAD…LLMM. The ABC transmembrane type-1 domain occupies 65 to 253; it reads LLASLTIGFC…LVAITLLLMM (189 aa).

It belongs to the binding-protein-dependent transport system permease family.

The protein localises to the cell inner membrane. Probably part of the PhnSTUV complex (TC 3.A.1.11.5) involved in 2-aminoethylphosphonate import. Probably responsible for the translocation of the substrate across the membrane. The polypeptide is Putative 2-aminoethylphosphonate transport system permease protein PhnV (phnV) (Salmonella typhimurium (strain LT2 / SGSC1412 / ATCC 700720)).